The chain runs to 321 residues: Cytochrome c biogenesis protein CcsA (321 aa).

The next 8 membrane-spanning stretches (helical) occupy residues 17 to 37, 48 to 68, 71 to 91, 98 to 118, 143 to 163, 225 to 245, 259 to 273, and 286 to 306; these read VVSIVIIIHFLTLLVNEFVGL, TFFCLTGLLITRWIYSGHLPI, LYESLIFLSWIFSIIHMVPYF, LSTITAPSTFFTQGFATWGLL, MVSGYAALLCGSLLSAALLVI, ILSIGFLFLTIGILSGAVWAN, TWAFITWTIFAIYFH, and AIVASIGFLIIWICYFGVNLL.

It belongs to the CcmF/CycK/Ccl1/NrfE/CcsA family. May interact with Ccs1.

It localises to the plastid. The protein localises to the chloroplast thylakoid membrane. Functionally, required during biogenesis of c-type cytochromes (cytochrome c6 and cytochrome f) at the step of heme attachment. The polypeptide is Cytochrome c biogenesis protein CcsA (Populus alba (White poplar)).